The chain runs to 570 residues: MSMFCYQCQEAAGCKGCTVRGVCGKTEDVAKSQDLLIYILKGISVYGVKGREVGVINKEVDNFMVEGLFATITNANFDREVFIERIKRGLQLRQELKEQVIKAGGNVENSHANKNWLDKMLSFVGLKKEEETKLPDAATWFADNVEEFNAKAEKVGVLATKDEDIRSLRELITYGIKGLAAYVEHAHNLNFDNEEIHGFMHKALAATLDDTLTVDDLVALTLETGKYGVEGMALLDKANTQTYGNPEITKVNIGVRNNPGILISGHDLRDLEQLLEQTKGTGVDVYTHSEMLPAHYYPAFKKYSHFAGNYGNAWWKQTEEFEKFNGPILMTTNCLVPPKDSYKDRVYTTGVVGFPGLKHIDADEKGEKDFSSIIEHAKKCAAPTEIEKGEIVGGFAHNQVFQLADKVVEAVKTGAIKRFFVMAGCDGRAKSRNYYTEFAQKLPKDTVILTAGCAKYKYNKLNLGDIGGIPRVLDAGQCNDSYSLALIALKLKEVFELEDINELPISYNIAWYEQKAVIVLLALLHLGVKNIHLGPTLPAFLSPNVANVLVENFGIGGITNVEDDMKMFLG.

[4Fe-4S] cluster-binding residues include cysteine 5, cysteine 8, cysteine 17, and cysteine 23. Hybrid [4Fe-2O-2S] cluster is bound by residues histidine 266, glutamate 290, cysteine 334, cysteine 425, cysteine 453, cysteine 478, glutamate 513, and lysine 515. Cysteine 425 is subject to Cysteine persulfide.

This sequence belongs to the HCP family. [4Fe-4S] cluster serves as cofactor. The cofactor is hybrid [4Fe-2O-2S] cluster.

The protein resides in the cytoplasm. The enzyme catalyses A + NH4(+) + H2O = hydroxylamine + AH2 + H(+). Catalyzes the reduction of hydroxylamine to form NH(3) and H(2)O. The chain is Hydroxylamine reductase from Clostridium tetani (strain Massachusetts / E88).